A 413-amino-acid polypeptide reads, in one-letter code: CinA-like protein (413 aa).

This sequence belongs to the CinA family.

The sequence is that of CinA-like protein from Geobacter metallireducens (strain ATCC 53774 / DSM 7210 / GS-15).